A 344-amino-acid chain; its full sequence is Outer membrane protein A (344 aa).

Over 1 to 14 (MKAIFVLNAAPKDN) the chain is Periplasmic. The chain crosses the membrane as a beta stranded span at residues 15 to 24 (TWYAGGKLGW). Topologically, residues 25-49 (SQYHDTGFYGNGFQNNNGPTRNDQL) are extracellular. A beta stranded membrane pass occupies residues 50–59 (GAGAFGGYQV). The Periplasmic portion of the chain corresponds to 60-62 (NPY). The beta stranded transmembrane segment at 63 to 71 (LGFEMGYDW) threads the bilayer. The Extracellular segment spans residues 72 to 89 (LGRMAYKGSVDNGAFKAQ). The beta stranded transmembrane segment at 90 to 100 (GVQLTAKLGYP) threads the bilayer. The Periplasmic segment spans residues 101 to 104 (ITDD). A beta stranded membrane pass occupies residues 105–114 (LDIYTRLGGM). Topologically, residues 115 to 139 (VWRADSKGNYASTGVSRSEHDTGVS) are extracellular. Residues 140-149 (PVFAGGVEWA) traverse the membrane as a beta stranded segment. The Periplasmic segment spans residues 150–153 (VTRD). Residues 154–162 (IATRLEYQW) form a beta stranded membrane-spanning segment. The Extracellular portion of the chain corresponds to 163–179 (VNNIGDAGTVGTRPDNG). Residues 180–188 (MLSLGVSYR) form a beta stranded membrane-spanning segment. At 189–344 (FGQEDAAPVV…YKEVVTQPQA (156 aa)) the chain is on the periplasmic side. Repeat copies occupy residues 199–200 (AP), 201–202 (AP), 203–204 (AP), and 205–206 (AP). Residues 199-206 (APAPAPAP) are 4 X 2 AA tandem repeats of A-P. The OmpA-like domain occupies 208–336 (VATKHFTLKS…RVEIEVKGYK (129 aa)). A disulfide bridge connects residues C309 and C321.

This sequence belongs to the outer membrane OOP (TC 1.B.6) superfamily. OmpA family. As to quaternary structure, monomer and homodimer.

It localises to the cell outer membrane. Functionally, with TolR probably plays a role in maintaining the position of the peptidoglycan cell wall in the periplasm. Acts as a porin with low permeability that allows slow penetration of small solutes; an internal gate slows down solute passage. In terms of biological role, required for conjugation with F-type plasmids; probably serves as the mating receptor on recipient cells. The chain is Outer membrane protein A from Klebsiella pneumoniae.